The chain runs to 383 residues: Putative glutamate--cysteine ligase 2-1 (383 aa).

This sequence belongs to the glutamate--cysteine ligase type 2 family. YbdK subfamily.

The catalysed reaction is L-cysteine + L-glutamate + ATP = gamma-L-glutamyl-L-cysteine + ADP + phosphate + H(+). ATP-dependent carboxylate-amine ligase which exhibits weak glutamate--cysteine ligase activity. In Arthrobacter sp. (strain FB24), this protein is Putative glutamate--cysteine ligase 2-1.